The chain runs to 144 residues: Bombinins BLP-7/GH-2 (144 aa).

Positions 1 to 18 (MNFKYIVAVSFLIASTYA) are cleaved as a signal peptide. Residues 19–43 (RSVKNDEQSLSQRDVLEEESLREIR) constitute a propeptide that is removed on maturation. Asparagine amide is present on N70. The propeptide occupies 74-123 (TAEEHEVMKRLEAVMRDLDSLDYPEEASEMETRSFNQEEIANLFTKKEKR). Residue I143 is modified to Isoleucine amide.

It belongs to the bombinin family. In terms of tissue distribution, expressed by the skin glands.

It is found in the secreted. Its function is as follows. Antimicrobial peptide with activity against Gram-positive and -negative bacteria and fungi. Shows activity against P.acnes (MIC=5 uM), E.coli (MIC=5-6.3 uM), S.aureus (MIC=5-6.3 uM), M.luteus, S.cerevisiae and C.albicans (MIC=10-12.5 uM). Also reduces the production of interleukin (IL)-8 and granulocyte-macrophage colony stimulating factor (CSF2) in normal human epidermal keratinocytes (NHEKs). Shows anticancer activity against three human hepatoma cell lines. In vivo, using the rat ear edema model, suppress P.acnes-induced skin inflammation, significantly reducing the ear thickness. Shows weak hemolytic activity against human erythrocytes. Shows weak antimicrobial activity but high hemolytic activity. The polypeptide is Bombinins BLP-7/GH-2 (Bombina orientalis (Oriental fire-bellied toad)).